A 230-amino-acid polypeptide reads, in one-letter code: ATP synthase subunit a (230 aa).

A run of 6 helical transmembrane segments spans residues 16–36 (LVLF…WLSI), 73–93 (WVSA…LGLL), 106–126 (TYSI…YLAF), 142–162 (LIPF…IALG), 165–185 (LAAN…AIWT), and 192–212 (IASI…GVAC).

It belongs to the ATPase A chain family. As to quaternary structure, F-type ATPases have 2 components, CF(1) - the catalytic core - and CF(0) - the membrane proton channel. CF(1) has five subunits: alpha(3), beta(3), gamma(1), delta(1), epsilon(1). CF(0) has three main subunits: a, b and c.

It localises to the mitochondrion inner membrane. Its function is as follows. Mitochondrial membrane ATP synthase (F(1)F(0) ATP synthase or Complex V) produces ATP from ADP in the presence of a proton gradient across the membrane which is generated by electron transport complexes of the respiratory chain. F-type ATPases consist of two structural domains, F(1) - containing the extramembraneous catalytic core and F(0) - containing the membrane proton channel, linked together by a central stalk and a peripheral stalk. During catalysis, ATP synthesis in the catalytic domain of F(1) is coupled via a rotary mechanism of the central stalk subunits to proton translocation. Key component of the proton channel; it may play a direct role in the translocation of protons across the membrane. This is ATP synthase subunit a (ATP6) from Patiria pectinifera (Starfish).